Consider the following 458-residue polypeptide: MEFDTIAAISTALGEGAIAIVRVSGDDAVEKVNRIFKGKDLTEVPSHTIHYGHIVDLDTNQVIEEVMVSIMRAPRTFTRENIVEINCHGGLVSVNKVLQLILAQGVRLAEPGEFTKRAFLNGRIDLSQAEAVMDLIRAKTDRAMNVAINQMEGRLSKLIGRLRQDILETLAHVEVNIDYPEYDDVEEMTHNILIEKATHVRAEIAKILETSKQGKILREGIATAIIGRPNVGKSSLLNSLVQEKKAIVTDIAGTTRDVIEEYVNVRGVPLKLIDTAGIRETEDVVERIGVERSKEMMSQADLVLVVVNYSETLTNEDEELFRAVQGKDFIVIVNKTDLPQAIDMERVIELAAGNRVITTSLIEEQGIDELEKAIADLFFEGTIDSADVTYVSNARHIGLLTQAGKTIGDAIEAIENGVPIDMVQIDLTRTWEILGEITGDTVHESLIDQLFSQFCLGK.

(6S)-5-formyl-5,6,7,8-tetrahydrofolate-binding residues include R22, E84, and R123. A TrmE-type G domain is found at G220–F379. N230 provides a ligand contact to K(+). GTP-binding positions include N230–S235, T249–T255, and D274–G277. Residue S234 participates in Mg(2+) binding. K(+) is bound by residues T249, I251, and T254. A Mg(2+)-binding site is contributed by T255. A (6S)-5-formyl-5,6,7,8-tetrahydrofolate-binding site is contributed by K458.

This sequence belongs to the TRAFAC class TrmE-Era-EngA-EngB-Septin-like GTPase superfamily. TrmE GTPase family. As to quaternary structure, homodimer. Heterotetramer of two MnmE and two MnmG subunits. Requires K(+) as cofactor.

The protein resides in the cytoplasm. Exhibits a very high intrinsic GTPase hydrolysis rate. Involved in the addition of a carboxymethylaminomethyl (cmnm) group at the wobble position (U34) of certain tRNAs, forming tRNA-cmnm(5)s(2)U34. This Bacillus anthracis protein is tRNA modification GTPase MnmE.